Consider the following 190-residue polypeptide: Small ribosomal subunit protein uS4c (190 aa).

In terms of domain architecture, S4 RNA-binding spans 92 to 152 (RLDHVVYRAG…KSPSSAQLPP (61 aa)).

It belongs to the universal ribosomal protein uS4 family. As to quaternary structure, part of the 30S ribosomal subunit. Contacts protein S5. The interaction surface between S4 and S5 is involved in control of translational fidelity.

Its subcellular location is the plastid. The protein resides in the chloroplast. Functionally, one of the primary rRNA binding proteins, it binds directly to 16S rRNA where it nucleates assembly of the body of the 30S subunit. Its function is as follows. With S5 and S12 plays an important role in translational accuracy. In Cyanidioschyzon merolae (strain NIES-3377 / 10D) (Unicellular red alga), this protein is Small ribosomal subunit protein uS4c (rps4).